The primary structure comprises 84 residues: Small ribosomal subunit protein bS16 (84 aa).

It belongs to the bacterial ribosomal protein bS16 family.

This Dechloromonas aromatica (strain RCB) protein is Small ribosomal subunit protein bS16.